Consider the following 328-residue polypeptide: Probable cytosolic iron-sulfur protein assembly protein 1 (328 aa).

WD repeat units lie at residues 12–49 (LHGD…LVEE), 54–93 (AHKK…YSGE), 102–141 (GHEN…EEFE), 148–187 (EHSQ…WECA), 192–233 (GHGG…ADVF), 246–284 (VHTR…RWEV), and 291–328 (AHTV…LREE).

This sequence belongs to the WD repeat CIA1 family. In terms of assembly, interacts with NAR1.

It is found in the cytoplasm. The protein localises to the nucleus. Functionally, essential component of the cytosolic iron-sulfur (Fe/S) protein assembly machinery. Required for the maturation of extramitochondrial Fe/S proteins. The protein is Probable cytosolic iron-sulfur protein assembly protein 1 of Eremothecium gossypii (strain ATCC 10895 / CBS 109.51 / FGSC 9923 / NRRL Y-1056) (Yeast).